Here is a 398-residue protein sequence, read N- to C-terminus: Dihydrolipoyllysine-residue acetyltransferase component of acetoin cleaving system (398 aa).

The Lipoyl-binding domain occupies Ala2–Gly77. At Lys43 the chain carries N6-lipoyllysine. In terms of domain architecture, Peripheral subunit-binding (PSBD) spans Lys118 to Leu155. Catalysis depends on residues His371 and Asp375.

This sequence belongs to the 2-oxoacid dehydrogenase family. (R)-lipoate serves as cofactor.

It catalyses the reaction N(6)-[(R)-dihydrolipoyl]-L-lysyl-[protein] + acetyl-CoA = N(6)-[(R)-S(8)-acetyldihydrolipoyl]-L-lysyl-[protein] + CoA. Its pathway is ketone degradation; acetoin degradation. The sequence is that of Dihydrolipoyllysine-residue acetyltransferase component of acetoin cleaving system (acoC) from Bacillus subtilis (strain 168).